Consider the following 404-residue polypeptide: Aspartokinase 1 (404 aa).

7–10 (KFGG) is a binding site for ATP. 25–30 (HIKEAI) is a binding site for substrate. ATP is bound at residue Ser-41. Substrate contacts are provided by residues 52–54 (TDS), Glu-79, 130–131 (LA), 155–158 (RGGS), and Ser-158. ATP contacts are provided by residues 178 to 179 (TD) and 184 to 189 (MTADPR). Substrate is bound by residues 299-301 (SVD), 355-356 (VT), 369-370 (PI), and 376-377 (SH). The ACT domain maps to 344-404 (AVGAGIMGVP…ALHEVFELSK (61 aa)).

Belongs to the aspartokinase family. As to quaternary structure, tetramer consisting of 2 isoforms Alpha (catalytic) and 2 isoforms Beta (function not known).

It catalyses the reaction L-aspartate + ATP = 4-phospho-L-aspartate + ADP. The protein operates within amino-acid biosynthesis; L-lysine biosynthesis via DAP pathway; (S)-tetrahydrodipicolinate from L-aspartate: step 1/4. It functions in the pathway amino-acid biosynthesis; L-methionine biosynthesis via de novo pathway; L-homoserine from L-aspartate: step 1/3. It participates in amino-acid biosynthesis; L-threonine biosynthesis; L-threonine from L-aspartate: step 1/5. Diaminopimelate-sensitive. Catalyzes the phosphorylation of the beta-carboxyl group of aspartic acid with ATP to yield 4-phospho-L-aspartate, which is involved in the branched biosynthetic pathway leading to the biosynthesis of amino acids threonine, isoleucine and methionine. This is Aspartokinase 1 (dapG) from Bacillus subtilis (strain 168).